Here is an 862-residue protein sequence, read N- to C-terminus: Valine--tRNA ligase (862 aa).

Residues 44 to 53 (NVTGSLHMGH) carry the 'HIGH' region motif. Zn(2+) contacts are provided by Cys176, Cys179, Cys344, Cys347, Cys417, Cys420, Cys438, and Cys441. The short motif at 528-532 (KMSKS) is the 'KMSKS' region element. Lys531 contacts ATP. The stretch at 802 to 862 (RRRQEKRLKE…RIREALSQIG (61 aa)) forms a coiled coil.

It belongs to the class-I aminoacyl-tRNA synthetase family. ValS type 1 subfamily. Monomer. Requires Zn(2+) as cofactor.

It localises to the cytoplasm. The catalysed reaction is tRNA(Val) + L-valine + ATP = L-valyl-tRNA(Val) + AMP + diphosphate. Functionally, catalyzes the attachment of valine to tRNA(Val). As ValRS can inadvertently accommodate and process structurally similar amino acids such as threonine, to avoid such errors, it has a 'posttransfer' editing activity that hydrolyzes mischarged Thr-tRNA(Val) in a tRNA-dependent manner. The protein is Valine--tRNA ligase of Thermus thermophilus (strain ATCC 27634 / DSM 579 / HB8).